We begin with the raw amino-acid sequence, 61 residues long: Large ribosomal subunit protein uL30 (61 aa).

Belongs to the universal ribosomal protein uL30 family. As to quaternary structure, part of the 50S ribosomal subunit.

The polypeptide is Large ribosomal subunit protein uL30 (Chlorobaculum parvum (strain DSM 263 / NCIMB 8327) (Chlorobium vibrioforme subsp. thiosulfatophilum)).